The sequence spans 462 residues: MVSPRKGKRIRMLKKNDIIQVAISDLSHEGAGVAKHDGFVFFVDNALPEEVIDMRVLKVNKNSGFGKVEAYHYLSSARNADVNLTYLRTGIADLGHLTYEDQLTFKKKQVQDSLYKIAGISDVTVESTIGMTEPLAYRNKAQVPVRRVNGQLETGFFRKHSHDLIPISDYYIQDKEIDRLINFTRDLLRRFDIKPYDETEQTGLLRNIVVRRGHYSGEMMLVLVTTRPKVFRVDQVIEKIVEAFPAVVSIIQNINDKNTNAIFGKDFKTLYGKDTITDSMLGNNYAISAQSFYQVNTVMAEKLYQTAIAFSDLSKDDIVIDAYSGIGTIGLSFAKTVKAVYGVEVIEAAVRDAQQNAALNGITNAYFVADTAEHAMATWAKDGIKPSVILVDPPRKGLTESFIQASVAMGPQKITYVSCNPATMARDIKRYQELGYKLAKVQPVDLFPQTHHVECVVLLIKE.

Residues 12–70 (MLKKNDIIQVAISDLSHEGAGVAKHDGFVFFVDNALPEEVIDMRVLKVNKNSGFGKVEA) enclose the TRAM domain. 4 residues coordinate S-adenosyl-L-methionine: Gln294, Tyr323, Glu344, and Asp392. Catalysis depends on Cys419, which acts as the Nucleophile.

The protein belongs to the class I-like SAM-binding methyltransferase superfamily. RNA M5U methyltransferase family.

This is an uncharacterized protein from Streptococcus pyogenes serotype M1.